The sequence spans 597 residues: uncharacterized protein (597 aa).

The span at 1–23 shows a compositional bias: basic and acidic residues; sequence MSHEGSRQARDRGVTRSKAEKAR. Disordered regions lie at residues 1–32 and 171–192; these read MSHE…VPQV and RESQ…NPRP. Low complexity predominate over residues 175 to 186; that stretch reads EPTQSSEPSAEP. 2 positions are modified to phosphoserine: Ser-237 and Ser-241. 2 disordered regions span residues 302–335 and 549–569; these read SLLS…MRLD and EAEE…GVSK. Positions 557–568 are enriched in polar residues; sequence APEQQPIQTGVS.

This is an uncharacterized protein from Rattus norvegicus (Rat).